Here is a 380-residue protein sequence, read N- to C-terminus: Queuine tRNA-ribosyltransferase (380 aa).

The active-site Proton acceptor is the D96. Residues 96–100 (DSGGF), D150, Q193, and G220 contribute to the substrate site. Residues 251-257 (GVGAPDS) are RNA binding. D270 functions as the Nucleophile in the catalytic mechanism. The segment at 275-279 (TRIAR) is RNA binding; important for wobble base 34 recognition. Residues C308, C310, C313, and H339 each coordinate Zn(2+).

The protein belongs to the queuine tRNA-ribosyltransferase family. Homodimer. Within each dimer, one monomer is responsible for RNA recognition and catalysis, while the other monomer binds to the replacement base PreQ1. Zn(2+) is required as a cofactor.

The catalysed reaction is 7-aminomethyl-7-carbaguanine + guanosine(34) in tRNA = 7-aminomethyl-7-carbaguanosine(34) in tRNA + guanine. It functions in the pathway tRNA modification; tRNA-queuosine biosynthesis. Functionally, catalyzes the base-exchange of a guanine (G) residue with the queuine precursor 7-aminomethyl-7-deazaguanine (PreQ1) at position 34 (anticodon wobble position) in tRNAs with GU(N) anticodons (tRNA-Asp, -Asn, -His and -Tyr). Catalysis occurs through a double-displacement mechanism. The nucleophile active site attacks the C1' of nucleotide 34 to detach the guanine base from the RNA, forming a covalent enzyme-RNA intermediate. The proton acceptor active site deprotonates the incoming PreQ1, allowing a nucleophilic attack on the C1' of the ribose to form the product. After dissociation, two additional enzymatic reactions on the tRNA convert PreQ1 to queuine (Q), resulting in the hypermodified nucleoside queuosine (7-(((4,5-cis-dihydroxy-2-cyclopenten-1-yl)amino)methyl)-7-deazaguanosine). This is Queuine tRNA-ribosyltransferase from Streptococcus equi subsp. equi (strain 4047).